We begin with the raw amino-acid sequence, 379 residues long: Homoserine O-succinyltransferase (379 aa).

An AB hydrolase-1 domain is found at 51–360; that stretch reads NAVLICHALS…DAPQGHDAFL (310 aa). Catalysis depends on Ser-157, which acts as the Nucleophile. Residue Arg-227 coordinates substrate. Active-site residues include Asp-323 and His-356. Asp-357 contacts substrate.

The protein belongs to the AB hydrolase superfamily. MetX family. In terms of assembly, homodimer.

It is found in the cytoplasm. The catalysed reaction is L-homoserine + succinyl-CoA = O-succinyl-L-homoserine + CoA. It participates in amino-acid biosynthesis; L-methionine biosynthesis via de novo pathway; O-succinyl-L-homoserine from L-homoserine: step 1/1. Functionally, transfers a succinyl group from succinyl-CoA to L-homoserine, forming succinyl-L-homoserine. The sequence is that of Homoserine O-succinyltransferase from Pseudomonas fluorescens (strain SBW25).